The primary structure comprises 671 residues: Amidase chry2 (671 aa).

The active-site Nucleophile is C2. One can recognise a Glutamine amidotransferase type-2 domain in the interval 2–220; the sequence is CGISAFITHP…PGHYLICRPN (219 aa). An Asparagine synthetase domain is found at 251–639; it reads VRERLLEAVR…TQDAMDGAFN (389 aa).

The protein belongs to the asparagine synthetase family.

Its pathway is pigment biosynthesis. Functionally, amidase; part of the gene cluster that mediates the biosynthesis of the yellow pigment chrysogine. Pyruvic acid and anthranilic acid are likely substrates for the nonribosomal peptide synthetase chry1/NRPS14, with pyruvic acid adenylated by the first A domain and anthranilic acid by the second. If pyruvic acid and anthranilic acid are merged and released from chry1/NRPS14 by hydrolysis, a subsequent amidation would lead to 2-pyruvoylaminobenzamide. This process is probably catalyzed by the amidotransferase chry2 using glutamine as amino donor. The dehydrogenase chry5 that has a terminal berberine bridge domain for C-N cyclization could catalyze the cyclization of 2-pyruvoylaminobenzamide to yield acetyl-4(3H)-quinazolidinone. A final reduction of acetyl-4(3H)-quinazolidinone catalyzed by the oxidoreductase chry4 would result in chrysogine. This chain is Amidase chry2, found in Gibberella zeae (strain ATCC MYA-4620 / CBS 123657 / FGSC 9075 / NRRL 31084 / PH-1) (Wheat head blight fungus).